The chain runs to 528 residues: DEAD-box ATP-dependent RNA helicase 6 (528 aa).

Composition is skewed to low complexity over residues 1-15 and 65-80; these read MNNN…PPGI and QQYV…QQQQ. The tract at residues 1–80 is disordered; the sequence is MNNNNNNRGR…GYPQQIQQQQ (80 aa). Residues 154–182 carry the Q motif motif; it reads NEFEDYFLKRDLLRGIYEKGFEKPSPIQE. The Helicase ATP-binding domain maps to 185-355; it reads IPIALTGSDI…DRYLKKPYII (171 aa). 198–205 lines the ATP pocket; the sequence is AKNGTGKT. Thr-260 carries the phosphothreonine modification. The DEAD box signature appears at 303–306; the sequence is DEAD. The Helicase C-terminal domain maps to 365–525; sequence GVTQYYAFVE…PIPSLIDKAI (161 aa).

The protein belongs to the DEAD box helicase family. DDX6/DHH1 subfamily.

It is found in the cytoplasm. Its subcellular location is the P-body. It carries out the reaction ATP + H2O = ADP + phosphate + H(+). ATP-dependent RNA helicase involved in mRNA turnover, and more specifically in mRNA decapping. This is DEAD-box ATP-dependent RNA helicase 6 (RH6) from Arabidopsis thaliana (Mouse-ear cress).